An 85-amino-acid polypeptide reads, in one-letter code: UPF0291 protein SAK_0343 (85 aa).

Residues Gly58–Ser85 are disordered. Residues Thr62–Ser85 show a composition bias toward basic and acidic residues.

This sequence belongs to the UPF0291 family.

Its subcellular location is the cytoplasm. The protein is UPF0291 protein SAK_0343 of Streptococcus agalactiae serotype Ia (strain ATCC 27591 / A909 / CDC SS700).